Consider the following 239-residue polypeptide: Probable methylthioribulose-1-phosphate dehydratase (239 aa).

Cys-100 serves as a coordination point for substrate. 2 residues coordinate Zn(2+): His-118 and His-120. Glu-141 acts as the Proton donor/acceptor in catalysis. A Zn(2+)-binding site is contributed by His-197.

This sequence belongs to the aldolase class II family. MtnB subfamily. Zn(2+) serves as cofactor.

It localises to the cytoplasm. The enzyme catalyses 5-(methylsulfanyl)-D-ribulose 1-phosphate = 5-methylsulfanyl-2,3-dioxopentyl phosphate + H2O. The protein operates within amino-acid biosynthesis; L-methionine biosynthesis via salvage pathway; L-methionine from S-methyl-5-thio-alpha-D-ribose 1-phosphate: step 2/6. Its function is as follows. Catalyzes the dehydration of methylthioribulose-1-phosphate (MTRu-1-P) into 2,3-diketo-5-methylthiopentyl-1-phosphate (DK-MTP-1-P). This is Probable methylthioribulose-1-phosphate dehydratase from Leishmania major.